A 429-amino-acid polypeptide reads, in one-letter code: Glutamate-1-semialdehyde 2,1-aminomutase (429 aa).

Lys-267 is modified (N6-(pyridoxal phosphate)lysine).

It belongs to the class-III pyridoxal-phosphate-dependent aminotransferase family. HemL subfamily. In terms of assembly, homodimer. It depends on pyridoxal 5'-phosphate as a cofactor.

The protein resides in the cytoplasm. The catalysed reaction is (S)-4-amino-5-oxopentanoate = 5-aminolevulinate. The protein operates within porphyrin-containing compound metabolism; protoporphyrin-IX biosynthesis; 5-aminolevulinate from L-glutamyl-tRNA(Glu): step 2/2. In Xanthomonas oryzae pv. oryzae (strain MAFF 311018), this protein is Glutamate-1-semialdehyde 2,1-aminomutase.